Reading from the N-terminus, the 338-residue chain is Ketol-acid reductoisomerase (NADP(+)) (338 aa).

In terms of domain architecture, KARI N-terminal Rossmann spans 1–181; the sequence is MQIFYDKDCD…GGGRTGIIET (181 aa). Residues 24-27, Arg-47, Ser-50, Ser-52, and 82-85 each bind NADP(+); these read YGSQ and DEFQ. Residue His-107 is part of the active site. Gly-133 is an NADP(+) binding site. A KARI C-terminal knotted domain is found at 182–327; it reads SFREETETDL…AKLRAMMPWI (146 aa). Positions 190, 194, 226, and 230 each coordinate Mg(2+). Residue Ser-251 participates in substrate binding.

It belongs to the ketol-acid reductoisomerase family. Mg(2+) serves as cofactor.

The enzyme catalyses (2R)-2,3-dihydroxy-3-methylbutanoate + NADP(+) = (2S)-2-acetolactate + NADPH + H(+). The catalysed reaction is (2R,3R)-2,3-dihydroxy-3-methylpentanoate + NADP(+) = (S)-2-ethyl-2-hydroxy-3-oxobutanoate + NADPH + H(+). Its pathway is amino-acid biosynthesis; L-isoleucine biosynthesis; L-isoleucine from 2-oxobutanoate: step 2/4. It participates in amino-acid biosynthesis; L-valine biosynthesis; L-valine from pyruvate: step 2/4. Its function is as follows. Involved in the biosynthesis of branched-chain amino acids (BCAA). Catalyzes an alkyl-migration followed by a ketol-acid reduction of (S)-2-acetolactate (S2AL) to yield (R)-2,3-dihydroxy-isovalerate. In the isomerase reaction, S2AL is rearranged via a Mg-dependent methyl migration to produce 3-hydroxy-3-methyl-2-ketobutyrate (HMKB). In the reductase reaction, this 2-ketoacid undergoes a metal-dependent reduction by NADPH to yield (R)-2,3-dihydroxy-isovalerate. The protein is Ketol-acid reductoisomerase (NADP(+)) of Acinetobacter baumannii (strain AB0057).